Reading from the N-terminus, the 321-residue chain is MSTASINSCLTISPAQASLKKPTRPVAFARLSNSSSSTSVPSLIRNEPVFAAPTPIINPILREEMAKESYEQAIAALEKLLSEKGELGPIAAARVDQITAELQSSDGSKPFDPVEHMKAGFIHFKTEKYEKNPALYGELSKGQSPKFMVFACSDSRVCPSHVLNFQPGEAFVVRNIANMVPAYDKTRYSGVGAAIEYAVLHLKVENIVVIGHSACGGIKGLMSLPADGSESTAFIEDWVKIGLPAKAKVQGEHVDKCFADQCTACEKEAVNVSLGNLLTYPFVREGLVKKTLALKGGHYDFVNGGFELWGLEFGLSPSLSV.

The transit peptide at 1–100 (MSTASINSCL…AAARVDQITA (100 aa)) directs the protein to the chloroplast.

This sequence belongs to the beta-class carbonic anhydrase family. As to quaternary structure, homohexamer.

The protein localises to the plastid. It localises to the chloroplast stroma. It catalyses the reaction hydrogencarbonate + H(+) = CO2 + H2O. In terms of biological role, reversible hydration of carbon dioxide. The polypeptide is Carbonic anhydrase, chloroplastic (Nicotiana tabacum (Common tobacco)).